The chain runs to 762 residues: MQNTRRCISLICVTRQPPSLRATYGAVAAARCLHRAPPQSSRKKHETNVSTLFKPVQVQANVDCEDVGSELVGKLEKSELLKILNKFTQRRETKSLCSENGLDSYLQQQAFGSFRRYCIEAENLPVDLHIIFSDIMQGAGHIDDIFPYFLRHAKTVFPHLDCMDDLKKISDLRQPANWYTNARALTRKIVFHSGPTNSGKTYHAMERYLSAKTGVYCGPLKLLATEVYNKANERGTPCDLVTGEERKFGISDNSPANHVACTVEMTSVNTPYEVAVIDEIQQIRDPQRGWAWTRAFLGLIADEVHVCGEAGALELLQKICETTGETVEVRRYDRLTELTVEDSALGSLDNVMPGDCIVCFSKHDIYTVSREIEARGKEVAVIYGGLPPGTKLAQAAKFNDPANSCKVMVATDAIGMGLNLSIRRIIFYSLVKPTMNERGEREIDTISVSSALQIAGRAGRFRTQWEHGYVTAFKSEDLQTLQRILAQTPEPLKQAGLHPTADQIELYAYHLPNSSLSNLMDIFVNLCTVDDSLYFMCNIEDFKFLAEMIQHVPLPLRARYVFCCAPINRKMPFVCSMFLKIARQYSRNEPITFEFIKSNCGWPFKLPKTILDLVHLESVFDVMDLYRFMDLFPEAGNVREAQKELDEIIQQGVFQITRLLKNTEASQEGETPNYSMRRVTHVKEPRLPSASRGRLTDRLLAQGLLTPGMLSELRKEWDAQQVGQAAAASTSSKESQESPPDDSDDEDSYPGSYKKTRRKRRK.

The N-terminal 36 residues, 1–36, are a transit peptide targeting the mitochondrion; the sequence is MQNTRRCISLICVTRQPPSLRATYGAVAAARCLHRA. Residues 181 to 321 form the Helicase ATP-binding domain; it reads NARALTRKIV…ALELLQKICE (141 aa). ATP is bound at residue 194–201; sequence GPTNSGKT. The Helicase C-terminal domain maps to 331-508; that stretch reads RYDRLTELTV…PTADQIELYA (178 aa). The interval 716 to 762 is disordered; the sequence is EWDAQQVGQAAAASTSSKESQESPPDDSDDEDSYPGSYKKTRRKRRK. Polar residues predominate over residues 721–730; it reads QVGQAAAAST. Positions 739 to 748 are enriched in acidic residues; it reads PPDDSDDEDS.

This sequence belongs to the helicase family. It depends on Mg(2+) as a cofactor. Mn(2+) serves as cofactor.

Its subcellular location is the mitochondrion. It catalyses the reaction ATP + H2O = ADP + phosphate + H(+). Major helicase player in mitochondrial RNA metabolism and maintenance. Likely component of the mitochondrial degradosome (mtEXO) complex, that degrades 3' overhang double-stranded RNA with a 3'-to-5' directionality in an ATP-dependent manner. ATPase and ATP-dependent multisubstrate helicase, able to unwind double-stranded (ds) DNA and RNA, and RNA/DNA heteroduplexes in the 5'-to-3' direction. Regulates mRNA stability and is required for the correct processing and maturation of mitochondrial transcripts. This Drosophila pseudoobscura pseudoobscura (Fruit fly) protein is ATP-dependent RNA helicase SUV3 homolog, mitochondrial.